Consider the following 291-residue polypeptide: ATP synthase subunit b 2 (291 aa).

A helical transmembrane segment spans residues 2-22 (LIDGFTVVAQIVNFLILVWLL).

The protein belongs to the ATPase B chain family. As to quaternary structure, F-type ATPases have 2 components, F(1) - the catalytic core - and F(0) - the membrane proton channel. F(1) has five subunits: alpha(3), beta(3), gamma(1), delta(1), epsilon(1). F(0) has three main subunits: a(1), b(2) and c(10-14). The alpha and beta chains form an alternating ring which encloses part of the gamma chain. F(1) is attached to F(0) by a central stalk formed by the gamma and epsilon chains, while a peripheral stalk is formed by the delta and b chains.

The protein resides in the cell inner membrane. Functionally, f(1)F(0) ATP synthase produces ATP from ADP in the presence of a proton or sodium gradient. F-type ATPases consist of two structural domains, F(1) containing the extramembraneous catalytic core and F(0) containing the membrane proton channel, linked together by a central stalk and a peripheral stalk. During catalysis, ATP synthesis in the catalytic domain of F(1) is coupled via a rotary mechanism of the central stalk subunits to proton translocation. Its function is as follows. Component of the F(0) channel, it forms part of the peripheral stalk, linking F(1) to F(0). This chain is ATP synthase subunit b 2, found in Nitrosospira multiformis (strain ATCC 25196 / NCIMB 11849 / C 71).